A 66-amino-acid polypeptide reads, in one-letter code: Photosystem II reaction center protein J (66 aa).

Residues 1 to 25 are disordered; that stretch reads MSGKKSPYPDGRIPDRNPDGTPAVP. Residues 37–57 traverse the membrane as a helical segment; the sequence is LWLVATAGGMAVLFVVGLFFY.

This sequence belongs to the PsbJ family. PSII is composed of 1 copy each of membrane proteins PsbA, PsbB, PsbC, PsbD, PsbE, PsbF, PsbH, PsbI, PsbJ, PsbK, PsbL, PsbM, PsbT, PsbX, PsbY, PsbZ, Psb30/Ycf12, peripheral proteins PsbO, CyanoQ (PsbQ), PsbU, PsbV and a large number of cofactors. It forms dimeric complexes.

It localises to the cellular thylakoid membrane. In terms of biological role, one of the components of the core complex of photosystem II (PSII). PSII is a light-driven water:plastoquinone oxidoreductase that uses light energy to abstract electrons from H(2)O, generating O(2) and a proton gradient subsequently used for ATP formation. It consists of a core antenna complex that captures photons, and an electron transfer chain that converts photonic excitation into a charge separation. In Synechococcus sp. (strain CC9605), this protein is Photosystem II reaction center protein J.